Reading from the N-terminus, the 639-residue chain is NADP-dependent malic enzyme, chloroplastic (639 aa).

Residues 1 to 49 constitute a chloroplast transit peptide; it reads MLSARAAATAAAAAASPLWKRGEGGSSGSGSGCTSCREVRRRAAAVRVR. The disordered stretch occupies residues 15–34; sequence ASPLWKRGEGGSSGSGSGCT. Tyr187 functions as the Proton donor in the catalytic mechanism. Arg240 lines the NAD(+) pocket. Residue Lys258 is the Proton acceptor of the active site. A divalent metal cation-binding residues include Glu330, Asp331, and Asp354. Position 354 (Asp354) interacts with NAD(+). 383–399 contacts NADP(+); that stretch reads LFLGAGEAGTGIAELIA. Residue Asn495 coordinates NAD(+).

The protein belongs to the malic enzymes family. As to quaternary structure, homotetramer. Requires Mg(2+) as cofactor. Mn(2+) is required as a cofactor.

Its subcellular location is the plastid. It localises to the chloroplast. The enzyme catalyses (S)-malate + NADP(+) = pyruvate + CO2 + NADPH. It catalyses the reaction oxaloacetate + H(+) = pyruvate + CO2. It functions in the pathway photosynthesis; C4 acid pathway. In terms of biological role, the chloroplastic ME isoform decarboxylates malate shuttled from neighboring mesophyll cells. The CO(2) released is then refixed by ribulose-bisphosphate carboxylase. This pathway eliminates the photorespiratory loss of CO(2) that occurs in most plants. The sequence is that of NADP-dependent malic enzyme, chloroplastic (ME6) from Oryza sativa subsp. japonica (Rice).